The following is a 72-amino-acid chain: Gene 79 protein (72 aa).

In Mycobacterium (Mycobacteriophage L5), this protein is Gene 79 protein (79).